Here is a 153-residue protein sequence, read N- to C-terminus: Insulin-like growth factor 1 (153 aa).

Residues 49-77 form a b region; it reads GPETLCGAELVDALQFVCGDRGFYFSKPT. 3 disulfides stabilise this stretch: Cys-54–Cys-96, Cys-66–Cys-109, and Cys-95–Cys-100. The segment at 78-89 is c; it reads GYGSSSRRLHHK. The interval 90–110 is a; the sequence is GIVDECCFQSCDLRRLEMYCA. The segment at 111–118 is d; that stretch reads PIKPPKSA. A propeptide spans 119–153 (e peptide); that stretch reads RSVRAQRHTDMPKAQKEVHLKNTSRGNTGNRNYRM. The tract at residues 119–153 is disordered; the sequence is RSVRAQRHTDMPKAQKEVHLKNTSRGNTGNRNYRM. Basic and acidic residues predominate over residues 125 to 138; that stretch reads RHTDMPKAQKEVHL. Residues 139-153 show a composition bias toward polar residues; the sequence is KNTSRGNTGNRNYRM.

Belongs to the insulin family. In terms of assembly, forms a ternary complex with IGFR1 and ITGAV:ITGB3. Forms a ternary complex with IGFR1 and ITGA6:ITGB4. Forms a ternary complex with IGFBP3 and ALS.

The protein localises to the secreted. Its function is as follows. The insulin-like growth factors, isolated from plasma, are structurally and functionally related to insulin but have a much higher growth-promoting activity. Acts as a ligand for IGF1R. Binds to the alpha subunit of IGF1R, leading to the activation of the intrinsic tyrosine kinase activity which autophosphorylates tyrosine residues in the beta subunit thus initiatiating a cascade of down-stream signaling events leading to activation of the PI3K-AKT/PKB and the Ras-MAPK pathways. Binds to integrins. Its binding to integrins and subsequent ternary complex formation with integrins and IGFR1 are essential for IGF1 signaling. The chain is Insulin-like growth factor 1 from Gallus gallus (Chicken).